We begin with the raw amino-acid sequence, 337 residues long: Pyridoxal 5'-phosphate synthase subunit PdxS (337 aa).

Asp-65 contributes to the D-ribose 5-phosphate binding site. Lys-122 (schiff-base intermediate with D-ribose 5-phosphate) is an active-site residue. Gly-194 is a D-ribose 5-phosphate binding site. A D-glyceraldehyde 3-phosphate-binding site is contributed by Lys-206. Residues Gly-255 and 276 to 277 (GS) each bind D-ribose 5-phosphate.

This sequence belongs to the PdxS/SNZ family. In the presence of PdxT, forms a dodecamer of heterodimers.

The catalysed reaction is aldehydo-D-ribose 5-phosphate + D-glyceraldehyde 3-phosphate + L-glutamine = pyridoxal 5'-phosphate + L-glutamate + phosphate + 3 H2O + H(+). It functions in the pathway cofactor biosynthesis; pyridoxal 5'-phosphate biosynthesis. Its function is as follows. Catalyzes the formation of pyridoxal 5'-phosphate from ribose 5-phosphate (RBP), glyceraldehyde 3-phosphate (G3P) and ammonia. The ammonia is provided by the PdxT subunit. Can also use ribulose 5-phosphate and dihydroxyacetone phosphate as substrates, resulting from enzyme-catalyzed isomerization of RBP and G3P, respectively. In Metallosphaera sedula (strain ATCC 51363 / DSM 5348 / JCM 9185 / NBRC 15509 / TH2), this protein is Pyridoxal 5'-phosphate synthase subunit PdxS.